The primary structure comprises 80 residues: Raniseptin-2 (80 aa).

The first 22 residues, 1–22 (MAFLKKSLFLVLFLGIVSLSIC), serve as a signal peptide directing secretion. Positions 23–49 (EEEKRVGEEEEKQEEENEELSEEELRE) are excised as a propeptide. The segment at 27 to 46 (RVGEEEEKQEEENEELSEEE) is disordered. The span at 30-44 (EEEEKQEEENEELSE) shows a compositional bias: acidic residues.

The protein belongs to the frog skin active peptide (FSAP) family. Dermaseptin subfamily. Expressed by the skin glands.

The protein resides in the secreted. Its function is as follows. Has antibacterial activity. In Boana raniceps (Chaco tree frog), this protein is Raniseptin-2.